Here is a 558-residue protein sequence, read N- to C-terminus: Phosphatidylserine lipase ABHD16A (558 aa).

Helical transmembrane passes span 60–80 (ILAL…FAFF) and 93–113 (VVPF…VACL). Residues 114-558 (RGIGRWTNPQ…AQHFQMPWHL (445 aa)) lie on the Cytoplasmic side of the membrane. The AB hydrolase-1 domain occupies 281-406 (LVICCEGNAG…ALVTRTVRQH (126 aa)). Active-site charge relay system residues include Ser355, Asp430, and His507.

It belongs to the AB hydrolase superfamily. ABHD16 family.

Its subcellular location is the membrane. It carries out the reaction 1-heptadecanoyl-2-(5Z,8Z,11Z,14Z-eicosatetraenoyl)-sn-glycero-3-phosphoserine + H2O = 1-heptadecanoyl-sn-glycero-3-phosphoserine + (5Z,8Z,11Z,14Z)-eicosatetraenoate + H(+). It catalyses the reaction 1-hexadecanoyl-2-(9Z-octadecenoyl)-sn-glycero-3-phospho-L-serine + H2O = 1-hexadecanoyl-sn-glycero-3-phospho-L-serine + (9Z)-octadecenoate + H(+). The catalysed reaction is 1-octadecanoyl-2-(9Z,12Z-octadecadienoyl)-sn-glycero-3-phosphoserine + H2O = 1-octadecanoyl-sn-glycero-3-phosphoserine + (9Z,12Z)-octadecadienoate + H(+). The enzyme catalyses 1-heptadecanoyl-2-(5Z,8Z,11Z,14Z-eicosatetraenoyl)-sn-glycero-3-phosphocholine + H2O = 1-heptadecanoyl-sn-glycero-3-phosphocholine + (5Z,8Z,11Z,14Z)-eicosatetraenoate + H(+). It carries out the reaction 1-hexadecanoyl-2-(9Z-octadecenoyl)-sn-glycero-3-phosphoglycerol + H2O = 1-hexadecanoyl-sn-glycero-3-phosphoglycerol + (9Z)-octadecenoate + H(+). It catalyses the reaction 1-hexadecanoyl-2-(9Z-octadecenoyl)-sn-glycero-3-phospho-(1D-myo-inositol) + H2O = 1-hexadecanoyl-sn-glycero-3-phospho-(1D-myo-inositol) + (9Z)-octadecenoate + H(+). The catalysed reaction is 1-heptadecanoyl-2-(5Z,8Z,11Z,14Z-eicosatetraenoyl)-sn-glycero-3-phosphoethanolamine + H2O = 1-heptadecanoyl-sn-glycero-3-phosphoethanolamine + (5Z,8Z,11Z,14Z)-eicosatetraenoate + H(+). The enzyme catalyses 1-hexadecanoyl-2-(9Z-octadecenoyl)-sn-glycero-3-phospho-(1'-sn-glycerol) + H2O = 1-hexadecanoyl-sn-glycero-3-phospho-(1'-sn-glycerol) + (9Z)-octadecenoate + H(+). It carries out the reaction Hydrolyzes glycerol monoesters of long-chain fatty acids.. It catalyses the reaction 1-tetradecanoylglycerol + H2O = tetradecanoate + glycerol + H(+). The catalysed reaction is 2-hexadecanoylglycerol + H2O = glycerol + hexadecanoate + H(+). The enzyme catalyses 1-(9Z-octadecenoyl)-glycerol + H2O = glycerol + (9Z)-octadecenoate + H(+). It carries out the reaction 2-(9Z-octadecenoyl)-glycerol + H2O = glycerol + (9Z)-octadecenoate + H(+). It catalyses the reaction 2-(9Z,12Z-octadecadienoyl)-glycerol + H2O = (9Z,12Z)-octadecadienoate + glycerol + H(+). The catalysed reaction is 1-(5Z,8Z,11Z,14Z-eicosatetraenoyl)-glycerol + H2O = glycerol + (5Z,8Z,11Z,14Z)-eicosatetraenoate + H(+). The enzyme catalyses 2-(5Z,8Z,11Z,14Z-eicosatetraenoyl)-glycerol + H2O = glycerol + (5Z,8Z,11Z,14Z)-eicosatetraenoate + H(+). It carries out the reaction prostaglandin D2-1-glycerol ester + H2O = prostaglandin D2 + glycerol + H(+). It catalyses the reaction 2-glyceryl-15-deoxy-Delta(12,14)-prostaglandin J2 + H2O = 15-deoxy-Delta(12,14)-prostaglandin J2 + glycerol + H(+). The catalysed reaction is 1-(9Z,12Z-octadecadienoyl)-glycerol + H2O = (9Z,12Z)-octadecadienoate + glycerol + H(+). With respect to regulation, specifically inhibited by alpha-alkylidene-beta-lactone KC01 ((Z)-6-(2-Oxo-4-tridecyloxetan-3-ylidene)hexanamide). In terms of biological role, phosphatidylserine (PS) lipase that mediates the hydrolysis of phosphatidylserine to generate lysophosphatidylserine (LPS). LPS constitutes a class of signaling lipids that regulates immunological and neurological processes. Has no activity towards diacylglycerol, triacylglycerol or lysophosphatidylserine lipase. Also has monoacylglycerol lipase activity, with preference for 1-(9Z,12Z-octadecadienoyl)-glycerol (1-LG) and 2-glyceryl-15-deoxy-Delta(12,14)-prostaglandin J2 (15d-PGJ(2)-G). The sequence is that of Phosphatidylserine lipase ABHD16A from Mus musculus (Mouse).